A 132-amino-acid chain; its full sequence is Bleomycin resistance protein (132 aa).

The VOC domain maps to 1 to 129 (MLQSIPALPV…DNNLISFFQQ (129 aa)).

The protein belongs to the bleomycin resistance protein family.

Functionally, binding protein with a strong affinity to the bleomycin family of antibiotics. The polypeptide is Bleomycin resistance protein (bleO) (Geobacillus stearothermophilus (Bacillus stearothermophilus)).